Consider the following 59-residue polypeptide: Ribosome biogenesis protein Nop10 (59 aa).

The protein belongs to the NOP10 family.

In terms of biological role, involved in ribosome biogenesis; more specifically in 18S rRNA pseudouridylation and in cleavage of pre-rRNA. This chain is Ribosome biogenesis protein Nop10, found in Thermococcus sibiricus (strain DSM 12597 / MM 739).